A 324-amino-acid polypeptide reads, in one-letter code: D-alanine--D-alanine ligase (324 aa).

In terms of domain architecture, ATP-grasp spans 121–321; the sequence is NQYLKAFGVR…IKDVMTDIIE (201 aa). ATP is bound at residue 149-204; the sequence is MEKIGLPCFIKPSLGGSSFGVTKVKTKEQIQPAIVKAFEEAQEVLVEAFMEGTELT. Positions 275, 288, and 290 each coordinate Mg(2+).

Belongs to the D-alanine--D-alanine ligase family. Requires Mg(2+) as cofactor. The cofactor is Mn(2+).

The protein localises to the cytoplasm. It catalyses the reaction 2 D-alanine + ATP = D-alanyl-D-alanine + ADP + phosphate + H(+). Its pathway is cell wall biogenesis; peptidoglycan biosynthesis. Its function is as follows. Cell wall formation. This Bacteroides thetaiotaomicron (strain ATCC 29148 / DSM 2079 / JCM 5827 / CCUG 10774 / NCTC 10582 / VPI-5482 / E50) protein is D-alanine--D-alanine ligase.